The chain runs to 396 residues: NADH-quinone oxidoreductase subunit D (396 aa).

It belongs to the complex I 49 kDa subunit family. As to quaternary structure, NDH-1 is composed of 14 different subunits. Subunits NuoB, C, D, E, F, and G constitute the peripheral sector of the complex.

The protein localises to the cell inner membrane. It catalyses the reaction a quinone + NADH + 5 H(+)(in) = a quinol + NAD(+) + 4 H(+)(out). Functionally, NDH-1 shuttles electrons from NADH, via FMN and iron-sulfur (Fe-S) centers, to quinones in the respiratory chain. The immediate electron acceptor for the enzyme in this species is believed to be ubiquinone. Couples the redox reaction to proton translocation (for every two electrons transferred, four hydrogen ions are translocated across the cytoplasmic membrane), and thus conserves the redox energy in a proton gradient. This Rhizobium johnstonii (strain DSM 114642 / LMG 32736 / 3841) (Rhizobium leguminosarum bv. viciae) protein is NADH-quinone oxidoreductase subunit D.